The sequence spans 290 residues: D-tagatose-1,6-bisphosphate aldolase subunit KbaY (290 aa).

The active-site Proton donor is the aspartate 82. Zn(2+) is bound by residues histidine 83 and histidine 180. Glycine 181 provides a ligand contact to dihydroxyacetone phosphate. Histidine 208 serves as a coordination point for Zn(2+). Residues 209 to 211 and 230 to 233 contribute to the dihydroxyacetone phosphate site; these read GAS and NVAT.

It belongs to the class II fructose-bisphosphate aldolase family. TagBP aldolase KbaY subfamily. Homotetramer. Forms a complex with KbaZ. Requires Zn(2+) as cofactor.

The catalysed reaction is D-tagatofuranose 1,6-bisphosphate = D-glyceraldehyde 3-phosphate + dihydroxyacetone phosphate. It functions in the pathway carbohydrate metabolism; D-tagatose 6-phosphate degradation; D-glyceraldehyde 3-phosphate and glycerone phosphate from D-tagatose 6-phosphate: step 2/2. In terms of biological role, catalytic subunit of the tagatose-1,6-bisphosphate aldolase KbaYZ, which catalyzes the reversible aldol condensation of dihydroxyacetone phosphate (DHAP or glycerone-phosphate) with glyceraldehyde 3-phosphate (G3P) to produce tagatose 1,6-bisphosphate (TBP). Requires KbaZ subunit for full activity and stability. The chain is D-tagatose-1,6-bisphosphate aldolase subunit KbaY from Salmonella arizonae (strain ATCC BAA-731 / CDC346-86 / RSK2980).